Reading from the N-terminus, the 272-residue chain is Phosphatidylglycerol--prolipoprotein diacylglyceryl transferase (272 aa).

4 helical membrane-spanning segments follow: residues 24 to 44, 59 to 79, 102 to 122, and 129 to 149; these read WYGI…KWIA, YFIW…ILFY, FIGI…IASF, and GVKF…GYVF. R151 provides a ligand contact to a 1,2-diacyl-sn-glycero-3-phospho-(1'-sn-glycerol). The next 3 helical transmembrane spans lie at 180–200, 208–228, and 244–264; these read PSQL…LYAW, GQLG…AEFW, and MGQL…GYLA.

It belongs to the Lgt family.

Its subcellular location is the cell inner membrane. The catalysed reaction is L-cysteinyl-[prolipoprotein] + a 1,2-diacyl-sn-glycero-3-phospho-(1'-sn-glycerol) = an S-1,2-diacyl-sn-glyceryl-L-cysteinyl-[prolipoprotein] + sn-glycerol 1-phosphate + H(+). It functions in the pathway protein modification; lipoprotein biosynthesis (diacylglyceryl transfer). Its function is as follows. Catalyzes the transfer of the diacylglyceryl group from phosphatidylglycerol to the sulfhydryl group of the N-terminal cysteine of a prolipoprotein, the first step in the formation of mature lipoproteins. The sequence is that of Phosphatidylglycerol--prolipoprotein diacylglyceryl transferase from Wolinella succinogenes (strain ATCC 29543 / DSM 1740 / CCUG 13145 / JCM 31913 / LMG 7466 / NCTC 11488 / FDC 602W) (Vibrio succinogenes).